Reading from the N-terminus, the 249-residue chain is Proteasome subunit alpha type-3 (249 aa).

It belongs to the peptidase T1A family. In terms of assembly, the 26S proteasome consists of a 20S proteasome core and two 19S regulatory subunits. The 20S proteasome core is composed of 28 subunits that are arranged in four stacked rings, resulting in a barrel-shaped structure. The two end rings are each formed by seven alpha subunits, and the two central rings are each formed by seven beta subunits. The catalytic chamber with the active sites is on the inside of the barrel.

Its subcellular location is the cytoplasm. The protein resides in the nucleus. In terms of biological role, the proteasome is a multicatalytic proteinase complex which is characterized by its ability to cleave peptides with Arg, Phe, Tyr, Leu, and Glu adjacent to the leaving group at neutral or slightly basic pH. The proteasome has an ATP-dependent proteolytic activity. This chain is Proteasome subunit alpha type-3 (PAG1), found in Oryza sativa subsp. japonica (Rice).